Reading from the N-terminus, the 110-residue chain is Large ribosomal subunit protein uL22 (110 aa).

This sequence belongs to the universal ribosomal protein uL22 family. Part of the 50S ribosomal subunit.

This protein binds specifically to 23S rRNA; its binding is stimulated by other ribosomal proteins, e.g. L4, L17, and L20. It is important during the early stages of 50S assembly. It makes multiple contacts with different domains of the 23S rRNA in the assembled 50S subunit and ribosome. Functionally, the globular domain of the protein is located near the polypeptide exit tunnel on the outside of the subunit, while an extended beta-hairpin is found that lines the wall of the exit tunnel in the center of the 70S ribosome. The sequence is that of Large ribosomal subunit protein uL22 from Citrobacter koseri (strain ATCC BAA-895 / CDC 4225-83 / SGSC4696).